Consider the following 347-residue polypeptide: Phenylalanine--tRNA ligase alpha subunit (347 aa).

Glu-261 contacts Mg(2+).

This sequence belongs to the class-II aminoacyl-tRNA synthetase family. Phe-tRNA synthetase alpha subunit type 1 subfamily. As to quaternary structure, tetramer of two alpha and two beta subunits. Requires Mg(2+) as cofactor.

It is found in the cytoplasm. The enzyme catalyses tRNA(Phe) + L-phenylalanine + ATP = L-phenylalanyl-tRNA(Phe) + AMP + diphosphate + H(+). The protein is Phenylalanine--tRNA ligase alpha subunit of Streptococcus pyogenes serotype M1.